The primary structure comprises 635 residues: Paraneoplastic antigen-like protein 8B (635 aa).

Disordered regions lie at residues 115–202, 260–332, and 492–635; these read PTQA…DESL, TDKS…NPEF, and AARE…PKCR. Polar residues predominate over residues 133-147; sequence SETQAQDSGEVTGQA. Residues 156 to 183 are compositionally biased toward basic residues; that stretch reads NPRRGRRGRRNRTRRNRLTQKGKKRSRG. Positions 261-273 are enriched in basic and acidic residues; the sequence is DKSKKEEAEKEPA. Acidic residues-rich tracts occupy residues 302–329 and 502–524; these read PDEEPVDSDTSESDSQESGDQETEELDN and GSEEASDEQSEEESEDTESEASE. Basic residues predominate over residues 531–540; sequence RKPRAKRART. The segment covering 541-557 has biased composition (low complexity); that stretch reads APRGLTPAGAPPTASGA. Composition is skewed to basic residues over residues 558 to 568 and 619 to 635; these read RKTRAGGRGRG and ARGKKARRGRRLPPKCR.

Belongs to the PNMA family.

This is Paraneoplastic antigen-like protein 8B from Homo sapiens (Human).